The sequence spans 1079 residues: Psi-producing oxygenase A (1079 aa).

Residues 105-446 (TNTFLTTLWN…DGSYDDNDLV (342 aa)) are linoleate 8R-lipoxygenase. Residue His202 coordinates heme b. Tyr374 is a catalytic residue. His377 contacts heme b. Residues 654 to 1079 (QFINSHSACM…WDGDLPEVKE (426 aa)) form a 9,12-octadecadienoate 8-hydroperoxide 8R-isomerase region.

This sequence belongs to the peroxidase family. Homotetramer. Requires heme b as cofactor.

The catalysed reaction is (9Z,12Z)-octadecadienoate + O2 = (8R,9Z,12Z)-8-hydroperoxyoctadeca-9,12-dienoate. It carries out the reaction (8R,9Z,12Z)-8-hydroperoxyoctadeca-9,12-dienoate = (5S,8R,9Z,12Z)-5,8-dihydroxyoctadeca-9,12-dienoate. In terms of biological role, bifunctional heme-containing enzyme that oxidizes linoleic acid to (8R,9Z,12Z)-8-hydroperoxyoctadeca-9,12-dienoate (within the N-terminal heme peroxidase domain), which is subsequently isomerized to (5S,8R,9Z,12Z)-5,8-dihydroxyoctadeca-9,12-dienoate (within the C-terminal P450 heme thiolate domain). Oxidized unsaturated fatty acids, so-called oxylipins, derived from endogenous fatty acids, influence the development of the asexual conidiophores and sexual cleistothecia and regulate the secondary metabolism. These substances were collectively named psi factors and are primarily a mixture of hydroxylated oleic, linoleic and alpha-linolenic acids. They are termed psi-beta, psi-alpha, and psi-gamma, respectively. Oxylipins may also serve as activators of mammalian immune responses contributing to enhanced resistance to opportunistic fungi and as factors that modulate fungal development contributing to resistance to host defenses. In Aspergillus fumigatus (strain CBS 144.89 / FGSC A1163 / CEA10) (Neosartorya fumigata), this protein is Psi-producing oxygenase A (ppoA).